A 359-amino-acid polypeptide reads, in one-letter code: 4-galactosyl-N-acetylglucosaminide 3-alpha-L-fucosyltransferase FUT6 (359 aa).

Residues 1–14 (MDPLGPAKPQWSCR) lie on the Cytoplasmic side of the membrane. The chain crosses the membrane as a helical; Signal-anchor for type II membrane protein span at residues 15–34 (CCLTTLLFQLLVAVCFFSYL). The Lumenal portion of the chain corresponds to 35 to 359 (RVSRDDPTVY…QTRSITAWFT (325 aa)). N-linked (GlcNAc...) asparagine glycosylation is found at N46, N91, N153, and N184. The segment at 73–112 (KPTALPRCSEMLPGTADCNITADRKVYPQADAVIVHHREV) is determines site-specific fucosylation.

The protein belongs to the glycosyltransferase 10 family. Homodimer and monomer. Monomer (secreted form). In terms of processing, N-glycosylated. Proteolytic cleavage releases a secreted glycoform of 43 kDa.

It localises to the golgi apparatus. The protein resides in the golgi stack membrane. It is found in the secreted. It catalyses the reaction a beta-D-galactosyl-(1-&gt;4)-N-acetyl-beta-D-glucosaminyl derivative + GDP-beta-L-fucose = a beta-D-galactosyl-(1-&gt;4)-[alpha-L-fucosyl-(1-&gt;3)]-N-acetyl-beta-D-glucosaminyl derivative + GDP + H(+). It carries out the reaction an N-acetyl-alpha-neuraminyl-(2-&gt;3)-beta-D-galactosyl-(1-&gt;4)-N-acetyl-beta-D-glucosaminyl derivative + GDP-beta-L-fucose = an alpha-Neu5Ac-(2-&gt;3)-beta-D-Gal-(1-&gt;4)-[alpha-L-Fuc-(1-&gt;3)]-beta-D-GlcNAc derivative + GDP + H(+). The enzyme catalyses an alpha-Neu5Ac-(2-&gt;3)-beta-D-Gal-(1-&gt;4)-beta-D-GlcNAc-(1-&gt;3)-beta-D-Gal-(1-&gt;4)-[alpha-L-Fuc-(1-&gt;3)]-beta-D-GlcNAc derivative + GDP-beta-L-fucose = an alpha-Neu5Ac-(2-&gt;3)-beta-D-Gal-(1-&gt;4)-[alpha-L-Fuc-(1-&gt;3)]-beta-D-GlcNAc-(1-&gt;3)-beta-D-Gal-(1-&gt;4)-[alpha-L-Fuc-(1-&gt;3)]-beta-D-GlcNAc derivative + GDP + H(+). The catalysed reaction is a neolactoside nLc6Cer + GDP-beta-L-fucose = beta-D-Gal-(1-&gt;4)-[alpha-L-Fuc-(1-&gt;3)]-beta-D-GlcNAc-(1-&gt;3)-beta-D-Gal-(1-&gt;4)-beta-D-GlcNAc-(1-&gt;3)-beta-D-Gal-(1-&gt;4)-beta-D-Glc-(1&lt;-&gt;1')-Cer + GDP + H(+). It catalyses the reaction a neolactoside nLc6Cer + GDP-beta-L-fucose = beta-D-galactosyl-(1-&gt;4)-N-acetyl-beta-D-glucosaminyl-(1-&gt;3)-beta-D-galactosyl-(1-&gt;4)-[alpha-L-fucosyl-(1-&gt;3)]-N-acetyl-beta-D-glucosaminyl-(1-&gt;3)-beta-D-galactosyl-(1-&gt;4)-beta-D-glucosyl-(1&lt;-&gt;1')-ceramide + GDP + H(+). It carries out the reaction a neolactoside VI(3)-alpha-NeuNAc-nLc6Cer + GDP-beta-L-fucose = a neolactoside VI(3)-alpha-NeuAc,V(3)-alphaFuc-nLc6Cer + GDP + H(+). The enzyme catalyses beta-D-galactosyl-(1-&gt;4)-N-acetyl-D-glucosamine + GDP-beta-L-fucose = beta-D-galactosyl-(1-&gt;4)-[alpha-L-fucosyl-(1-&gt;3)]-N-acetyl-D-glucosamine + GDP + H(+). The catalysed reaction is N-acetyl-alpha-neuraminosyl-(2-&gt;3)-beta-D-galactosyl-(1-&gt;4)-N-acetyl-beta-D-glucosamine + GDP-beta-L-fucose = N-acetyl-alpha-neuraminosyl-(2-&gt;3)-beta-D-galactosyl-(1-&gt;4)-[alpha-L-fucosyl-(1-&gt;3)]-N-acetyl-beta-D-glucosamine + GDP + H(+). It catalyses the reaction lactose + GDP-beta-L-fucose = beta-D-galactosyl-(1-&gt;4)-[alpha-L-fucosyl-(1-&gt;3)]-D-glucose + GDP + H(+). It carries out the reaction alpha-L-Fuc-(1-&gt;2)-beta-D-Gal-(1-&gt;4)-D-Glc + GDP-beta-L-fucose = alpha-L-Fuc-(1-&gt;2)-beta-D-Gal-(1-&gt;4)-[alpha-L-Fuc-(1-&gt;3)]-D-Glc + GDP + H(+). The enzyme catalyses a beta-D-galactosyl-(1-&gt;4)-N-acetyl-beta-D-6-sulfooxy-glucosaminyl derivative + GDP-beta-L-fucose = a beta-D-galactosyl-(1-&gt;4)-[alpha-L-fucosyl-(1-&gt;3)]-N-acetyl-beta-D-6-sulfooxy-glucosaminyl derivative + GDP + H(+). Its pathway is protein modification; protein glycosylation. Functionally, catalyzes the transfer of L-fucose, from a guanosine diphosphate-beta-L-fucose, to the N-acetyl glucosamine (GlcNAc) of a distal alpha2,3 sialylated lactosamine unit of a glycoprotein- or glycolipid-linked sialopolylactosamines chain or of a distal or internal lactosamine unit of a neutral glycoprotein- or glycolipid-linked polylactosamines chain through an alpha-1,3 glycosidic linkage and participates in surface expression of the sialyl Lewis X (sLe(x)), Lewis X (Le(x)) and non sialylated VIM2 determinants. Moreover transfers fucose to H-type 2 (Fucalpha1-2Galbeta1-4GlcNAc) chain acceptor substrates and participates in difucosylated sialyl Lewis x determinants. Also fucosylates a polylactosamine substrate having a 6 sulfate modification at the GlcNAc moiety and gives rise to sialyl and non-sialyl 6-sulfo lewis X. Does not have activity towards type 1 ((Galbeta1-3GlcNAc)) and H-type 1 chain (Fucalpha1-2Galbeta1-3GlcNAc) acceptors substrates. This is 4-galactosyl-N-acetylglucosaminide 3-alpha-L-fucosyltransferase FUT6 from Gorilla gorilla gorilla (Western lowland gorilla).